We begin with the raw amino-acid sequence, 296 residues long: uncharacterized protein (296 aa).

The first 20 residues, 1-20 (MKKALGILAILLILVGGYFA), serve as a signal peptide directing secretion.

This is an uncharacterized protein from Aquifex aeolicus (strain VF5).